A 208-amino-acid polypeptide reads, in one-letter code: Imidazoleglycerol-phosphate dehydratase (208 aa).

The disordered stretch occupies residues 1-20 (MSRRATVKAPRAGAAARRGA). Positions 7 to 19 (VKAPRAGAAARRG) are enriched in low complexity.

Belongs to the imidazoleglycerol-phosphate dehydratase family.

It is found in the cytoplasm. It carries out the reaction D-erythro-1-(imidazol-4-yl)glycerol 3-phosphate = 3-(imidazol-4-yl)-2-oxopropyl phosphate + H2O. Its pathway is amino-acid biosynthesis; L-histidine biosynthesis; L-histidine from 5-phospho-alpha-D-ribose 1-diphosphate: step 6/9. The sequence is that of Imidazoleglycerol-phosphate dehydratase from Anaeromyxobacter sp. (strain K).